A 406-amino-acid chain; its full sequence is Exodeoxyribonuclease 7 large subunit (406 aa).

This sequence belongs to the XseA family. As to quaternary structure, heterooligomer composed of large and small subunits.

Its subcellular location is the cytoplasm. It catalyses the reaction Exonucleolytic cleavage in either 5'- to 3'- or 3'- to 5'-direction to yield nucleoside 5'-phosphates.. Bidirectionally degrades single-stranded DNA into large acid-insoluble oligonucleotides, which are then degraded further into small acid-soluble oligonucleotides. The protein is Exodeoxyribonuclease 7 large subunit of Thermobifida fusca (strain YX).